The following is a 223-amino-acid chain: ATP-dependent dethiobiotin synthetase BioD (223 aa).

Thr-16 lines the Mg(2+) pocket. Lys-37 is a catalytic residue. A substrate-binding site is contributed by Ser-41. Positions 50 and 111 each coordinate Mg(2+). ATP-binding positions include Asp-50, 111–114 (EGAG), and 171–172 (NR).

The protein belongs to the dethiobiotin synthetase family. In terms of assembly, homodimer. Mg(2+) is required as a cofactor.

The protein localises to the cytoplasm. The catalysed reaction is (7R,8S)-7,8-diammoniononanoate + CO2 + ATP = (4R,5S)-dethiobiotin + ADP + phosphate + 3 H(+). It functions in the pathway cofactor biosynthesis; biotin biosynthesis; biotin from 7,8-diaminononanoate: step 1/2. Catalyzes a mechanistically unusual reaction, the ATP-dependent insertion of CO2 between the N7 and N8 nitrogen atoms of 7,8-diaminopelargonic acid (DAPA, also called 7,8-diammoniononanoate) to form a ureido ring. This Anaeromyxobacter dehalogenans (strain 2CP-C) protein is ATP-dependent dethiobiotin synthetase BioD.